The sequence spans 972 residues: UvrABC system protein A (972 aa).

32–39 contacts ATP; sequence GLSGSGKS. The C4-type; atypical zinc finger occupies 257–285; the sequence is CPNGHALAVDDLEPRSFSFNSPYGACPEC. 2 ABC transporter domains span residues 315–601 and 621–950; these read WSNG…KDSI and VDPR…KFLA. 654–661 is a binding site for ATP; it reads GVSGSGKS. The C4-type zinc-finger motif lies at 753 to 779; it reads CEACTGDGTIKIEMNFLPDVYVPCEVC.

The protein belongs to the ABC transporter superfamily. UvrA family. Forms a heterotetramer with UvrB during the search for lesions.

Its subcellular location is the cytoplasm. Its function is as follows. The UvrABC repair system catalyzes the recognition and processing of DNA lesions. UvrA is an ATPase and a DNA-binding protein. A damage recognition complex composed of 2 UvrA and 2 UvrB subunits scans DNA for abnormalities. When the presence of a lesion has been verified by UvrB, the UvrA molecules dissociate. The polypeptide is UvrABC system protein A (Mycobacterium bovis (strain ATCC BAA-935 / AF2122/97)).